The primary structure comprises 65 residues: Large ribosomal subunit protein bL35 (65 aa).

It belongs to the bacterial ribosomal protein bL35 family.

The chain is Large ribosomal subunit protein bL35 from Karelsulcia muelleri (strain GWSS) (Sulcia muelleri).